A 396-amino-acid chain; its full sequence is Queuine tRNA-ribosyltransferase catalytic subunit 1 (396 aa).

Asp99 functions as the Proton acceptor in the catalytic mechanism. Queuine-binding positions include 99 to 103 (DSGGF), Asp153, Gln196, and Gly223. The RNA binding stretch occupies residues 254 to 260 (GVGYATD). Catalysis depends on Asp273, which acts as the Nucleophile. The RNA binding; important for wobble base 34 recognition stretch occupies residues 278–282 (TRTAR). Zn(2+) is bound by residues Cys311, Cys313, Cys316, and His341.

It belongs to the queuine tRNA-ribosyltransferase family. In terms of assembly, heterodimer of a catalytic subunit qtrt1 and an accessory subunit qtrt2. The cofactor is Zn(2+).

It localises to the cytoplasm. The protein localises to the mitochondrion outer membrane. It catalyses the reaction guanosine(34) in tRNA + queuine = queuosine(34) in tRNA + guanine. Its function is as follows. Catalytic subunit of the queuine tRNA-ribosyltransferase (TGT) that catalyzes the base-exchange of a guanine (G) residue with queuine (Q) at position 34 (anticodon wobble position) in tRNAs with GU(N) anticodons (tRNA-Asp, -Asn, -His and -Tyr), resulting in the hypermodified nucleoside queuosine (7-(((4,5-cis-dihydroxy-2-cyclopenten-1-yl)amino)methyl)-7-deazaguanosine). Catalysis occurs through a double-displacement mechanism. The nucleophile active site attacks the C1' of nucleotide 34 to detach the guanine base from the RNA, forming a covalent enzyme-RNA intermediate. The proton acceptor active site deprotonates the incoming queuine, allowing a nucleophilic attack on the C1' of the ribose to form the product. The sequence is that of Queuine tRNA-ribosyltransferase catalytic subunit 1 from Xenopus laevis (African clawed frog).